The sequence spans 258 residues: L-aspartate dehydrogenase 1 (258 aa).

Residues Ala-121 and Asn-181 each coordinate NAD(+). His-211 is a catalytic residue.

Belongs to the L-aspartate dehydrogenase family.

The enzyme catalyses L-aspartate + NADP(+) + H2O = oxaloacetate + NH4(+) + NADPH + H(+). The catalysed reaction is L-aspartate + NAD(+) + H2O = oxaloacetate + NH4(+) + NADH + H(+). It participates in cofactor biosynthesis; NAD(+) biosynthesis; iminoaspartate from L-aspartate (dehydrogenase route): step 1/1. Its function is as follows. Specifically catalyzes the NAD or NADP-dependent dehydrogenation of L-aspartate to iminoaspartate. This chain is L-aspartate dehydrogenase 1, found in Bordetella bronchiseptica (strain ATCC BAA-588 / NCTC 13252 / RB50) (Alcaligenes bronchisepticus).